A 1215-amino-acid polypeptide reads, in one-letter code: Endoplasmic reticulum transmembrane helix translocase (1215 aa).

Residues 1–27 (MTKKSFVSSPIVRDSTLLVPKSLIAKP) are Cytoplasmic-facing. The chain crosses the membrane as a helical span at residues 28–43 (YVLPFFPLYATFAQLY). Topologically, residues 44–56 (FQQYDRYIKGPEW) are lumenal. A helical transmembrane segment spans residues 57 to 76 (TFVYLGTLVSLNILVMLMPA). The Cytoplasmic segment spans residues 77-188 (WNVKIKAKFN…ENSFDIPIPT (112 aa)). The tract at residues 156 to 185 (KIGDFQKCKGHSGDLTHLKRLYGENSFDIP) is A-domain; part 1. The chain crosses the membrane as a helical span at residues 189-216 (FMELFKEHAVAPLFVFQVFCVALWLLDE). A topological domain (lumenal) is located at residue F217. Residues 218–246 (WYYSLFNLFMIISMEAAAVFQRLTALKEF) traverse the membrane as a helical segment. The Cytoplasmic portion of the chain corresponds to 247–395 (RTMGIKPYTI…IYSAERVSVD (149 aa)). Residues 250-390 (GIKPYTINVF…LVRVMIYSAE (141 aa)) are A-domain; part 2. The residue at position 324 (S324) is a Phosphoserine. Residues 396 to 425 (NKEALMFILFLLIFAVIASWYVWVEGTKMG) traverse the membrane as a helical segment. Over 426–427 (RI) the chain is Lumenal. The next 2 membrane-spanning stretches (helical) occupy residues 428–442 (QSKL…ITSV) and 446–464 (ELPM…ALAK). Topologically, residues 465 to 971 (FYVYCTEPFR…APFTSKLANV (507 aa)) are cytoplasmic. A P-domain; part 1 region spans residues 466 to 495 (YVYCTEPFRIPFAGRIDVCCFDKTGTLTGE). The 4-aspartylphosphate intermediate role is filled by D487. D487 and T489 together coordinate Mg(2+). ATP-binding positions include 487-489 (DKT), F582, R634, D699, and 816-820 (DGTND). Residues 497–674 (LVFEGLAGIS…FNGFLIFHCP (178 aa)) form an N-domain region. The segment at 677-837 (DDAIETIKML…HVGIALLNGT (161 aa)) is P-domain; part 2. D816 contacts Mg(2+). The arm-like stretch occupies residues 838–953 (EEGLKKLGEQ…DAQGDEAPAL (116 aa)). Position 936 is a phosphoserine (S936). The P-domain; part 3 stretch occupies residues 954–969 (KLGDASCAAPFTSKLA). A helical membrane pass occupies residues 972–1011 (SAVTNIIRQGRCALVNTIQMYKILALNCLISAYSLSIIYM). At 1012–1017 (AGVKFG) the chain is on the lumenal side. The helical transmembrane segment at 1018 to 1035 (DGQATVSGLLLSVCFLSI) threads the bilayer. At 1036–1055 (SRGKPLEKLSKQRPQSGIFN) the chain is on the cytoplasmic side. The helical transmembrane segment at 1056–1084 (VYIMGSILSQFAVHIATLVYITTEIYKLE) threads the bilayer. The Lumenal portion of the chain corresponds to 1085–1099 (PREPQVDLEKEFAPS). The chain crosses the membrane as a helical span at residues 1100-1121 (LLNTGIFIIQLVQQVSTFAVNY). Residues 1122–1133 (QGEPFRENIRSN) lie on the Cytoplasmic side of the membrane. The chain crosses the membrane as a helical span at residues 1134-1151 (KGMYYGLLGVTGLALASA). The Lumenal segment spans residues 1152-1168 (TEFLPELNEAMKFVPMT). Residues 1169 to 1197 (DDFKIKLTLTLLLDFFGSWGVEHFFKFFF) form a helical membrane-spanning segment. Over 1198–1215 (MDDKPSDISVQQVKIASK) the chain is Cytoplasmic.

Belongs to the cation transport ATPase (P-type) (TC 3.A.3) family. Type V subfamily. Requires Mg(2+) as cofactor.

The protein resides in the endoplasmic reticulum membrane. The enzyme catalyses [protein]-with a C-terminal TM segment(out) + ATP + H2O = [protein]-with a C-terminal TM segment(in) + ADP + phosphate + H(+). The ATPase activity is stimulated by phosphatidylinositol 4-phosphate (PI4P). In terms of biological role, endoplasmic reticulum translocase required to remove mitochondrial transmembrane proteins mistargeted to the endoplasmic reticulum. Acts as a dislocase that mediates the ATP-dependent extraction of mislocalized mitochondrial transmembrane proteins from the endoplasmic reticulum membrane. Specifically binds mitochondrial tail-anchored transmembrane proteins: has an atypically large substrate-binding pocket that recognizes and binds moderately hydrophobic transmembranes with short hydrophilic lumenal domains. This Saccharomyces cerevisiae (strain ATCC 204508 / S288c) (Baker's yeast) protein is Endoplasmic reticulum transmembrane helix translocase.